A 66-amino-acid polypeptide reads, in one-letter code: Large ribosomal subunit protein uL29 (66 aa).

The protein belongs to the universal ribosomal protein uL29 family.

In Fervidobacterium nodosum (strain ATCC 35602 / DSM 5306 / Rt17-B1), this protein is Large ribosomal subunit protein uL29.